Reading from the N-terminus, the 151-residue chain is Chemokine-like factor (151 aa).

The MARVEL domain occupies 13–133; that stretch reads FCLSLKCFVK…DCALMCQKLR (121 aa). 4 consecutive transmembrane segments (helical) span residues 19–39, 45–65, 74–94, and 107–127; these read CFVK…FIVA, YIVI…LYMC, FFWP…MLIV, and IMVG…DCAL. Asparagine 142 carries an N-linked (GlcNAc...) asparagine glycan.

This sequence belongs to the chemokine-like factor family. Both isoforms have highest expression levels in testis with relatively lower expression level in liver, spleen, lung, brain and heart and barely detectable levels in skeletal muscle and kidney were barely detected. In most tissues, isoform CKLF2 has higher expression levels than isoform CKLF1.

It is found in the secreted. The protein resides in the membrane. Functionally, may play an important role in inflammation and regeneration of skeletal muscle. Essential for embryonic development. Has chemotactic response in monocytes, neutrophils and lymphocytes. Binds CCR4. This Rattus norvegicus (Rat) protein is Chemokine-like factor (Cklf).